The chain runs to 362 residues: DNA replication and repair protein RecF (362 aa).

30–37 (GLNAQGKS) contacts ATP.

This sequence belongs to the RecF family.

The protein resides in the cytoplasm. Its function is as follows. The RecF protein is involved in DNA metabolism; it is required for DNA replication and normal SOS inducibility. RecF binds preferentially to single-stranded, linear DNA. It also seems to bind ATP. The sequence is that of DNA replication and repair protein RecF from Thermoanaerobacter sp. (strain X514).